A 433-amino-acid chain; its full sequence is MANIIKVIGREIMDSRGNPTVEAEVHLEGGFIGMAAAPSGASTGSREALELRDGDKARYLGKGVLKAVAAVNGPIAEALKGKDALAQAELDQIMIDLDGTENKAKFGANAILAVSLAVAKAAADAKHVPLYAHIADLNGTPGVYSMPLPMMNIINGGEHADNSVDIQEFMIQPVGAKTFREGLRMGAEVFHSLAKVLKADGHSTAVGDEGGFAPNLASNEAALAAIKVAVANAGYELGKDITLAMDCAASEFYDKEANIYDLKGEGKKFTSEEFNFFLQGLTERYPIVSIEDGLDESDWDGFAHQTKLMGDKIQLVGDDLFVTNTKILKRGIDNGIANSILIKFNQIGTLTETLAAIKMAKDAGFTVVISHRSGETEDSTIADLAVGTAAGQIKTGSLSRSDRVAKYNQLLRIEEALGSKAPYNGLKEVKGQG.

A (2R)-2-phosphoglycerate-binding site is contributed by Gln-167. The Proton donor role is filled by Glu-209. 3 residues coordinate Mg(2+): Asp-246, Glu-291, and Asp-318. Residues Lys-343, Arg-372, Ser-373, and Lys-394 each contribute to the (2R)-2-phosphoglycerate site. Lys-343 (proton acceptor) is an active-site residue.

The protein belongs to the enolase family. Component of the RNA degradosome, a multiprotein complex involved in RNA processing and mRNA degradation. Mg(2+) is required as a cofactor.

The protein localises to the cytoplasm. Its subcellular location is the secreted. It is found in the cell surface. It catalyses the reaction (2R)-2-phosphoglycerate = phosphoenolpyruvate + H2O. The protein operates within carbohydrate degradation; glycolysis; pyruvate from D-glyceraldehyde 3-phosphate: step 4/5. Catalyzes the reversible conversion of 2-phosphoglycerate (2-PG) into phosphoenolpyruvate (PEP). It is essential for the degradation of carbohydrates via glycolysis. The sequence is that of Enolase from Shewanella frigidimarina (strain NCIMB 400).